The primary structure comprises 79 residues: Acyl carrier protein (79 aa).

The region spanning 2–77 (SDIEARVRKI…HAIDYIKSNA (76 aa)) is the Carrier domain. Ser37 is subject to O-(pantetheine 4'-phosphoryl)serine.

The protein belongs to the acyl carrier protein (ACP) family. In terms of processing, 4'-phosphopantetheine is transferred from CoA to a specific serine of apo-ACP by AcpS. This modification is essential for activity because fatty acids are bound in thioester linkage to the sulfhydryl of the prosthetic group.

The protein resides in the cytoplasm. Its pathway is lipid metabolism; fatty acid biosynthesis. Functionally, carrier of the growing fatty acid chain in fatty acid biosynthesis. The polypeptide is Acyl carrier protein (Xylella fastidiosa (strain M23)).